The primary structure comprises 467 residues: A-type ATP synthase subunit B (467 aa).

Residues 95–114 form a disordered region; it reads GKGQPRDHMPLPPPEDFRDV.

It belongs to the ATPase alpha/beta chains family. As to quaternary structure, has multiple subunits with at least A(3), B(3), C, D, E, F, H, I and proteolipid K(x).

Its subcellular location is the cell membrane. In terms of biological role, component of the A-type ATP synthase that produces ATP from ADP in the presence of a proton gradient across the membrane. The B chain is a regulatory subunit. This chain is A-type ATP synthase subunit B, found in Pyrobaculum neutrophilum (strain DSM 2338 / JCM 9278 / NBRC 100436 / V24Sta) (Thermoproteus neutrophilus).